We begin with the raw amino-acid sequence, 344 residues long: L-rhamnose-proton symporter (344 aa).

A run of 10 helical transmembrane segments spans residues 4–24 (PILL…CFYA), 38–58 (WSLG…WWLL), 68–88 (FDMA…IGNI), 101–121 (MGIG…TPVL), 137–157 (TLLG…AGLL), 175–195 (LILA…MDAA), 207–227 (INAL…GAVV), 255–275 (LIAN…QFFF), 290–310 (ISWM…GLLF), and 324–344 (LVLG…GMAA).

This sequence belongs to the L-rhamnose transporter (TC 2.A.7.6) family.

It localises to the cell inner membrane. It carries out the reaction L-rhamnopyranose(in) + H(+)(in) = L-rhamnopyranose(out) + H(+)(out). Its function is as follows. Uptake of L-rhamnose across the cytoplasmic membrane with the concomitant transport of protons into the cell (symport system). This chain is L-rhamnose-proton symporter, found in Pectobacterium carotovorum subsp. carotovorum (strain PC1).